The chain runs to 42 residues: Photosystem I reaction center subunit IX (42 aa).

A helical membrane pass occupies residues 7-27 (YLSTAPVLAAVWFTVLAGILI).

This sequence belongs to the PsaJ family.

The protein resides in the plastid. Its subcellular location is the chloroplast thylakoid membrane. Its function is as follows. May help in the organization of the PsaE and PsaF subunits. This is Photosystem I reaction center subunit IX from Ostreococcus tauri.